Reading from the N-terminus, the 1984-residue chain is Vitellogenin receptor Yl (1984 aa).

Positions 1-19 (MCQAEHQVHPSEQRIRVES) are enriched in basic and acidic residues. Residues 1–48 (MCQAEHQVHPSEQRIRVESPKMTASRRGFNLTSQTRAHPSSGGSTSSR) form a disordered region. Asparagine 30 is a glycosylation site (N-linked (GlcNAc...) asparagine). Positions 30-48 (NLTSQTRAHPSSGGSTSSR) are enriched in polar residues. LDL-receptor class A domains lie at 89–125 (RCDA…LDCD), 128–167 (LCRP…LNCP), 183–221 (SCSK…AGCK), 226–263 (TCPG…RGCL), and 265–305 (LCEP…DLCH). 20 disulfides stabilise this stretch: cysteine 90–cysteine 102, cysteine 97–cysteine 115, cysteine 109–cysteine 124, cysteine 129–cysteine 144, cysteine 137–cysteine 157, cysteine 151–cysteine 166, cysteine 184–cysteine 197, cysteine 191–cysteine 210, cysteine 204–cysteine 220, cysteine 227–cysteine 239, cysteine 234–cysteine 253, cysteine 247–cysteine 262, cysteine 266–cysteine 281, cysteine 275–cysteine 294, cysteine 288–cysteine 304, cysteine 310–cysteine 321, cysteine 315–cysteine 331, cysteine 352–cysteine 363, cysteine 359–cysteine 372, and cysteine 374–cysteine 387. In terms of domain architecture, EGF-like 1 spans 306–343 (SKPDCDAKKCALGAKCHMMPASGAECFCPKGFRLAKFE). The 41-residue stretch at 348–388 (DVDECKEQDDLCSQGCENTSGGYRCVCDAGYLLDKDNRTCR) folds into the EGF-like 2; calcium-binding domain. N-linked (GlcNAc...) asparagine glycosylation is found at asparagine 365, asparagine 384, and asparagine 429. LDL-receptor class B repeat units follow at residues 441 to 485 (SHIY…DWLT), 486 to 528 (QNIY…WPQK), 529 to 572 (GLMF…DMHQ), and 573 to 615 (QRIY…FEDQ). Asparagine 666, asparagine 749, and asparagine 782 each carry an N-linked (GlcNAc...) asparagine glycan. LDL-receptor class B repeat units lie at residues 750–792 (GSLI…DHLS), 793–836 (RNLY…MPAE), 884–925 (QTIF…VHHD), and 934–940 (PRIYWTH). The N-linked (GlcNAc...) asparagine glycan is linked to asparagine 1022. 5 consecutive LDL-receptor class A domains span residues 1024–1063 (TCVE…MNCD), 1073–1110 (LCSP…QHCE), 1117–1153 (KCHV…LLCE), 1157–1194 (RCEP…DKCV), and 1197–1233 (SCPP…LNCG). 15 disulfides stabilise this stretch: cysteine 1025–cysteine 1040, cysteine 1035–cysteine 1053, cysteine 1047–cysteine 1062, cysteine 1074–cysteine 1087, cysteine 1081–cysteine 1100, cysteine 1094–cysteine 1109, cysteine 1118–cysteine 1130, cysteine 1125–cysteine 1143, cysteine 1137–cysteine 1152, cysteine 1158–cysteine 1170, cysteine 1165–cysteine 1183, cysteine 1177–cysteine 1193, cysteine 1198–cysteine 1210, cysteine 1205–cysteine 1223, and cysteine 1217–cysteine 1232. An N-linked (GlcNAc...) asparagine glycan is attached at asparagine 1240. LDL-receptor class A domains follow at residues 1242 to 1280 (SCAE…ADCG) and 1282 to 1319 (VCSI…LSCE). Intrachain disulfides connect cysteine 1243–cysteine 1257, cysteine 1250–cysteine 1270, cysteine 1264–cysteine 1279, cysteine 1283–cysteine 1296, cysteine 1290–cysteine 1309, and cysteine 1303–cysteine 1318. Residue asparagine 1265 is glycosylated (N-linked (GlcNAc...) asparagine). A glycan (N-linked (GlcNAc...) asparagine) is linked at asparagine 1326. Positions 1339–1376 (SCRPHLFDCQDGECVDLSRVCNNFPDCTNGHDEGPKCA) constitute an LDL-receptor class A 13 domain. Disulfide bonds link cysteine 1340–cysteine 1352, cysteine 1347–cysteine 1365, cysteine 1359–cysteine 1375, cysteine 1422–cysteine 1432, and cysteine 1428–cysteine 1441. One can recognise an EGF-like 3; calcium-binding domain in the interval 1418 to 1453 (DIDECQEQQPCAQLCENTLGGYQCQCHADFMLRQDR). 2 N-linked (GlcNAc...) asparagine glycosylation sites follow: asparagine 1475 and asparagine 1490. LDL-receptor class B repeat units follow at residues 1588 to 1637 (ARIF…DPHQ) and 1638 to 1687 (QLLY…YENN). Residues 1800-1820 (WLMALFVLAAGSLIAGLGYMY) form a helical membrane-spanning segment. Residues 1821 to 1984 (YQYRQRGHTD…GNDANARFVS (164 aa)) lie on the Cytoplasmic side of the membrane. Serine 1926 carries the phosphoserine modification. Disordered regions lie at residues 1927 to 1951 (KLHA…RQVP) and 1965 to 1984 (SAGQ…RFVS). The span at 1932–1946 (DGGGAGGDGDGGRGV) shows a compositional bias: gly residues.

It belongs to the LDLR family. As to quaternary structure, interacts with osk (isoform A). As to expression, ovary.

The protein localises to the cell membrane. It is found in the cytoplasm. The protein resides in the cell cortex. Its subcellular location is the cytoplasmic vesicle. It localises to the clathrin-coated vesicle membrane. The protein localises to the early endosome membrane. It is found in the endosome. The protein resides in the multivesicular body lumen. Functionally, cell surface receptor involved in uptake of vitellogenins (yolk proteins) into developing oocytes by receptor-mediated endocytosis. May also mediate uptake of apolpp/apolipophorins and their incorporation into yolk granules. Along with its ligands, required for maintenance of microtubule plus-end orientation towards the posterior pole of oocytes. Involved in polarized localization of germ plasm components, such as osk mRNA and vas protein, to the oocyte posterior cortex. Receptor-mediated endocytosis of vitellogenin receptor ligands is critical for osk (isoform A) mediated actin reorganization and the anchoring of germ plasm components to the oocyte cortex. The sequence is that of Vitellogenin receptor Yl from Drosophila melanogaster (Fruit fly).